The following is a 344-amino-acid chain: Glyceraldehyde-3-phosphate dehydrogenase (344 aa).

Residues 11 to 12 and Gly110 each bind NAD(+); that span reads TI. A D-glyceraldehyde 3-phosphate-binding site is contributed by 139–141; it reads SCN. The active-site Nucleophile is the Cys140. Arg169 serves as a coordination point for NAD(+). A D-glyceraldehyde 3-phosphate-binding site is contributed by 195–196; it reads HG. Gln302 contacts NAD(+).

The protein belongs to the glyceraldehyde-3-phosphate dehydrogenase family. As to quaternary structure, homotetramer.

The protein resides in the cytoplasm. The catalysed reaction is D-glyceraldehyde 3-phosphate + phosphate + NADP(+) = (2R)-3-phospho-glyceroyl phosphate + NADPH + H(+). The enzyme catalyses D-glyceraldehyde 3-phosphate + phosphate + NAD(+) = (2R)-3-phospho-glyceroyl phosphate + NADH + H(+). It functions in the pathway carbohydrate degradation; glycolysis; pyruvate from D-glyceraldehyde 3-phosphate: step 1/5. The polypeptide is Glyceraldehyde-3-phosphate dehydrogenase (Pyrobaculum calidifontis (strain DSM 21063 / JCM 11548 / VA1)).